Consider the following 257-residue polypeptide: Septu protein PtuB (257 aa).

Positions 49-96 (CVYCECRLDEESKYMEVEHFLPKDTYPNLVVNWRNLLPSCKRCNGKKG) constitute an HNH domain.

Its function is as follows. Component of antiviral defense system Septu type I, composed of PtuA and PtuB. Expression of Septu type I in B.subtilis (strain BEST7003) confers resistance to phages SBSphiC and SBSphiJ. May be a nuclease. The polypeptide is Septu protein PtuB (Bacillus thuringiensis).